Here is a 132-residue protein sequence, read N- to C-terminus: Histone H2A.2 (132 aa).

Ser2 carries the N-acetylserine modification. N6-acetyllysine occurs at positions 5 and 8. N6-succinyllysine occurs at positions 14 and 22. Gln106 carries the post-translational modification N5-methylglutamine. N6-malonyllysine is present on Lys120. Lys127 participates in a covalent cross-link: Glycyl lysine isopeptide (Lys-Gly) (interchain with G-Cter in SUMO). Ser129 bears the Phosphoserine mark. The [ST]-Q motif motif lies at 129 to 130 (SQ).

The protein belongs to the histone H2A family. The nucleosome is a histone octamer containing two molecules each of H2A, H2B, H3 and H4 assembled in one H3-H4 heterotetramer and two H2A-H2B heterodimers. The octamer wraps approximately 147 bp of DNA. Interacts with NAP1. In terms of processing, phosphorylated to form H2AS128ph (gamma-H2A) in response to DNA double-strand breaks (DSBs) generated by exogenous genotoxic agents and by stalled replication forks. Phosphorylation is dependent on the DNA damage checkpoint kinases MEC1/ATR and TEL1/ATM, spreads on either side of a detected DSB site and may mark the surrounding chromatin for recruitment of proteins required for DNA damage signaling and repair. Gamma-H2A interacts with ARP4, a shared component of the NuA4 histone acetyltransferase complex and the INO80 and SWR1 chromatin remodeling complexes, and serves to recruit first NuA4, mediating histone H4 acetylation, and subsequently the INO80/SWR1 complexes, facilitating DNA resection, to DSB sites. Gamma-H2A is required for sequestering cohesin around the break site, which is important for efficient post-replicative double-strand break repair by homologous recombination, holding the damaged chromatid close to its undamaged sister template. Gamma-H2A is removed from the DNA prior to the strand invasion-primer extension step of the repair process and subsequently dephosphorylated by PPH3, a component of the histone H2A phosphatase complex (HTP-C). Dephosphorylation is necessary for efficient recovery from the DNA damage checkpoint. N-acetylated by NAT4. Post-translationally, acetylated by ESA1, a component of the NuA4 histone acetyltransferase (HAT) complex, to form H2AK4ac and H2AK7ac. In terms of processing, glutamine methylation at Gln-106 (H2AQ105me) by NOP1 is specifically dedicated to polymerase I. It is present at 35S ribosomal DNA locus and impairs binding of the FACT complex. Sumoylated to from H2AK126su. May lead to transcriptional repression.

The protein localises to the nucleus. It is found in the chromosome. Functionally, core component of nucleosome which plays a central role in DNA double strand break (DSB) repair. Nucleosomes wrap and compact DNA into chromatin, limiting DNA accessibility to the cellular machineries which require DNA as a template. Histones thereby play a central role in transcription regulation, DNA repair, DNA replication and chromosomal stability. DNA accessibility is regulated via a complex set of post-translational modifications of histones, also called histone code, and nucleosome remodeling. The sequence is that of Histone H2A.2 (HTA2) from Saccharomyces cerevisiae (strain ATCC 204508 / S288c) (Baker's yeast).